The sequence spans 633 residues: NBPF family member NBPF3 (633 aa).

The disordered stretch occupies residues 15 to 52 (RGPDVETSPFGAPRAASHGVGRHQELRDPTVPGPTSSA). The stretch at 127-186 (LRDERLLTEEKLAEELGQAEELRQYKVLVHSQERELTQLREKLQEGRDASRSLNQHLQAL) forms a coiled coil. Olduvai domains are found at residues 221–313 (ENDD…CIIP), 314–402 (ENES…ATSP), 405–460 (SREL…LDLD), 461–552 (RMKK…PPCP), and 555–633 (NEVL…IFPH). Residues 316-326 (ESDHEQEEEKG) are compositionally biased toward basic and acidic residues. A disordered region spans residues 316–370 (ESDHEQEEEKGPVSPRNLQESEEEEAPQESWDEGDWTLSIPPDMSASYQSDRSTF). Residues 335–350 (ESEEEEAPQESWDEGD) show a composition bias toward acidic residues. The disordered stretch occupies residues 463–484 (KKDQEEEEDQGPPCPRLSRELP).

The protein belongs to the NBPF family. Expressed in testis and fetal heart, as well as in non small cell lung carcinoma and neuroblastoma cell line.

It localises to the cytoplasm. The chain is NBPF family member NBPF3 from Homo sapiens (Human).